A 1561-amino-acid chain; its full sequence is Rho GTPase-activating protein 190 (1561 aa).

FF domains lie at Tyr-252–Lys-320, Tyr-365–Ser-419, Lys-426–Asp-480, and Ile-482–Phe-547. The region spanning Ser-592–Leu-765 is the pG1 pseudoGTPase domain. The pG2 pseudoGTPase domain maps to Arg-766–Glu-926. 5 positions are modified to phosphoserine: Ser-973, Ser-975, Ser-985, Ser-988, and Ser-996. Residues Lys-1054 to Cys-1074 are disordered. The Rho-GAP domain maps to Ala-1349–Phe-1552.

With respect to regulation, negatively regulated by integrin, bsk and Src/Src64B. In terms of biological role, GTPase-activating protein (GAP) for RhoA/Rho1 that plays an essential role in the stability of dorsal branches of mushroom body (MB) neurons. The MB neurons are the center for olfactory learning and memory. Acts by converting RhoA/Rho1 to an inactive GDP-bound state, leading to repress the RhoA/Rho1-Drok-MRLC signaling pathway thereby maintaining axon branch stability. This is Rho GTPase-activating protein 190 (RhoGAPp190) from Drosophila melanogaster (Fruit fly).